Reading from the N-terminus, the 1378-residue chain is S-cell enriched with leucine-rich repeat-containing protein slrA (1378 aa).

The chain crosses the membrane as a helical span at residues 17 to 37; the sequence is IFKILYCYLFTSLLLILSTWV. N-linked (GlcNAc...) asparagine glycans are attached at residues Asn59, Asn112, Asn143, Asn172, and Asn201. LRR repeat units lie at residues 143–165, 167–188, 191–212, 213–235, 236–257, 260–281, 282–304, 307–329, and 331–353; these read NLTG…LPYL, HLRN…GLLK, SLVA…ADSK, AISY…WKTP, NLLF…EFFR, SLDY…LSKS, RISY…TCWK, SLRI…IFDH, and PLQY…LDCA. N-linked (GlcNAc...) asparagine glycosylation is found at Asn265, Asn287, and Asn296. N-linked (GlcNAc...) asparagine glycosylation is found at Asn416, Asn436, Asn451, Asn491, Asn513, Asn596, Asn605, Asn634, Asn704, Asn710, Asn740, Asn741, Asn771, Asn788, Asn801, Asn826, Asn843, Asn861, Asn875, and Asn907. Positions 886 to 946 form a coiled coil; the sequence is SLNNNNNNNN…NNNENNNENK (61 aa). Residues 891 to 909 are compositionally biased toward low complexity; sequence NNNNNNNNNKNNNNNNNDS. A disordered region spans residues 891–945; that stretch reads NNNNNNNNNKNNNNNNNDSNNEKEVVEDEEEDLDYSSQNDNNNINNNNNENNNEN. Residues 915 to 924 show a composition bias toward acidic residues; it reads VVEDEEEDLD. Positions 929–945 are enriched in low complexity; the sequence is NDNNNINNNNNENNNEN. Asn953, Asn970, Asn1090, and Asn1100 each carry an N-linked (GlcNAc...) asparagine glycan. A helical transmembrane segment spans residues 1160-1180; it reads YYIVFFGCASGLILVLVICIV. Positions 1227–1276 are enriched in low complexity; that stretch reads DLNNNNNNNNNNNNNNNNNNNNNNNNNNNNNNNNNFNDGSDTFNNNNKKN. Residues 1227–1378 are disordered; sequence DLNNNNNNNN…KKHLTIINKK (152 aa). Over residues 1289 to 1304 the composition is skewed to basic and acidic residues; the sequence is DGKENDIKNINNKKDE. Residues 1305–1324 are compositionally biased toward acidic residues; it reads KEDDGDDDDDEDDDEYEDDT. A compositionally biased stretch (low complexity) spans 1328-1353; that stretch reads SSGNSSRSKGSDGGSSSNSLSSDKQS. 2 N-linked (GlcNAc...) asparagine glycosylation sites follow: Asn1331 and Asn1360. A compositionally biased stretch (polar residues) spans 1354 to 1364; that stretch reads FNNGNENNSII. The segment covering 1368–1378 has biased composition (basic residues); that stretch reads KKKHLTIINKK.

The protein localises to the membrane. The chain is S-cell enriched with leucine-rich repeat-containing protein slrA (slrA) from Dictyostelium discoideum (Social amoeba).